A 1368-amino-acid polypeptide reads, in one-letter code: DNA-directed RNA polymerase subunit beta (1368 aa).

This sequence belongs to the RNA polymerase beta chain family. The RNAP catalytic core consists of 2 alpha, 1 beta, 1 beta' and 1 omega subunit. When a sigma factor is associated with the core the holoenzyme is formed, which can initiate transcription.

It catalyses the reaction RNA(n) + a ribonucleoside 5'-triphosphate = RNA(n+1) + diphosphate. DNA-dependent RNA polymerase catalyzes the transcription of DNA into RNA using the four ribonucleoside triphosphates as substrates. The polypeptide is DNA-directed RNA polymerase subunit beta (Cupriavidus necator (strain ATCC 17699 / DSM 428 / KCTC 22496 / NCIMB 10442 / H16 / Stanier 337) (Ralstonia eutropha)).